The following is a 155-amino-acid chain: Small ribosomal subunit protein eS19B (155 aa).

This sequence belongs to the eukaryotic ribosomal protein eS19 family.

The protein is Small ribosomal subunit protein eS19B (RpS19b) of Drosophila melanogaster (Fruit fly).